The sequence spans 433 residues: Glutamate-1-semialdehyde 2,1-aminomutase (433 aa).

At K270 the chain carries N6-(pyridoxal phosphate)lysine.

It belongs to the class-III pyridoxal-phosphate-dependent aminotransferase family. HemL subfamily. Homodimer. Pyridoxal 5'-phosphate serves as cofactor.

The protein localises to the cytoplasm. The enzyme catalyses (S)-4-amino-5-oxopentanoate = 5-aminolevulinate. Its pathway is porphyrin-containing compound metabolism; protoporphyrin-IX biosynthesis; 5-aminolevulinate from L-glutamyl-tRNA(Glu): step 2/2. The sequence is that of Glutamate-1-semialdehyde 2,1-aminomutase from Symbiobacterium thermophilum (strain DSM 24528 / JCM 14929 / IAM 14863 / T).